A 193-amino-acid polypeptide reads, in one-letter code: ATP synthase subunit b 2 (193 aa).

A helical transmembrane segment spans residues 44-64 (IFWLVLTLLAIYFVLTKIALP).

The protein belongs to the ATPase B chain family. F-type ATPases have 2 components, F(1) - the catalytic core - and F(0) - the membrane proton channel. F(1) has five subunits: alpha(3), beta(3), gamma(1), delta(1), epsilon(1). F(0) has three main subunits: a(1), b(2) and c(10-14). The alpha and beta chains form an alternating ring which encloses part of the gamma chain. F(1) is attached to F(0) by a central stalk formed by the gamma and epsilon chains, while a peripheral stalk is formed by the delta and b chains.

The protein resides in the cell inner membrane. Functionally, f(1)F(0) ATP synthase produces ATP from ADP in the presence of a proton or sodium gradient. F-type ATPases consist of two structural domains, F(1) containing the extramembraneous catalytic core and F(0) containing the membrane proton channel, linked together by a central stalk and a peripheral stalk. During catalysis, ATP synthesis in the catalytic domain of F(1) is coupled via a rotary mechanism of the central stalk subunits to proton translocation. In terms of biological role, component of the F(0) channel, it forms part of the peripheral stalk, linking F(1) to F(0). The b'-subunit is a diverged and duplicated form of b found in plants and photosynthetic bacteria. This is ATP synthase subunit b 2 (atpF2) from Jannaschia sp. (strain CCS1).